The following is a 378-amino-acid chain: Poly(3-hydroxyalkanoate) polymerase subunit PhaC (378 aa).

The AB hydrolase-1 domain occupies 84-356; sequence PVLIVYALVN…QSFPVGHIGM (273 aa).

It belongs to the PHA/PHB synthase family. Type III PhaC subfamily. As to quaternary structure, forms a heterodimer with PhaE, which may multimerize in the presence of 3-hydroxybutyryl-CoA. Both subunits are required for PHB synthesis in E.coli and in PHA-negative A.eutrophus.

The protein resides in the cytoplasm. The enzyme catalyses (3R)-3-hydroxybutanoyl-CoA + [(3R)-hydroxybutanoate](n) = [(3R)-hydroxybutanoate](n+1) + CoA. It functions in the pathway biopolymer metabolism; poly-(R)-3-hydroxybutanoate biosynthesis. In terms of biological role, when expressed in E.coli with Synechocystis PhaE and C.necator PhaA and PhaB, confers the ability to synthesize up to 13% (w/w) poly(3-hydroxybutyrate) (PHB) depending on the carbon source; all 4 genes are necessary for PHB production. Cell-free in vitro coexpression with PhaE gives a heterodimer able to polymerize 3-hydroxybutyrate-CoA. In Synechocystis sp. (strain ATCC 27184 / PCC 6803 / Kazusa), this protein is Poly(3-hydroxyalkanoate) polymerase subunit PhaC.